A 584-amino-acid chain; its full sequence is Kelch domain-containing protein 4 (584 aa).

Residues 1–10 (MGKKGKKEKK) are compositionally biased toward basic residues. 2 disordered regions span residues 1–33 (MGKKGKKEKKGRGAEKTAAKMEKKVSKRSRKEE) and 50–69 (KTQVTETPCPPPSPRLNASL). A compositionally biased stretch (basic and acidic residues) spans 11 to 24 (GRGAEKTAAKMEKK). Kelch repeat units lie at residues 77–129 (ELIL…VVPQ), 133–187 (QLWV…AWKR), 188–238 (QLIL…LMAV), 243–289 (SIAI…INPS), and 308–361 (QILV…RRGK). 3 disordered regions span residues 348-381 (KGPKSEKKKRRRGKAEDPEGTTEQETGGSSAPEP), 405-433 (SGLGVQPSPKADDSASEASSTGQEPCPRS), and 482-533 (PKSQ…EQFE). At Ser-418 the chain carries Phosphoserine. The Kelch 6 repeat unit spans residues 443 to 494 (LLYVYGGMFEAGDRQVTLSDLYCLDLHKMEEWKTLVEMDPKSQEWLEESDSE). Over residues 487–519 (WLEESDSEEDSSSDEESEDGEDKDQEDSAEEGA) the composition is skewed to acidic residues. Residues 520–533 (DPQHPEVARGEQFE) show a composition bias toward basic and acidic residues.

This Mus musculus (Mouse) protein is Kelch domain-containing protein 4 (Klhdc4).